The primary structure comprises 129 residues: Dynein 14 kDa light chain, flagellar outer arm (129 aa).

Residues 2 to 109 enclose the Thioredoxin domain; sequence AFITEIANEA…LNRIVTELSG (108 aa). Cys-34 and Cys-37 are joined by a disulfide. The segment at 107–129 is disordered; sequence LSGKNPPPAAPAAAPAAPAAEAS. A compositionally biased stretch (low complexity) spans 117–129; it reads PAAAPAAPAAEAS.

As to quaternary structure, consists of at least 3 heavy chains (alpha, beta and gamma), 2 intermediate chains and 8 light chains.

It localises to the cell projection. The protein resides in the cilium. It is found in the flagellum. The protein localises to the cytoplasm. Its subcellular location is the cytoskeleton. It localises to the flagellum axoneme. In terms of biological role, may be involved in regulating the redox state of functionally important thiol groups within dynein. This chain is Dynein 14 kDa light chain, flagellar outer arm, found in Chlamydomonas reinhardtii (Chlamydomonas smithii).